The primary structure comprises 270 residues: uncharacterized protein (270 aa).

Residues 1-22 (MEYIKKIALYMSVLLLIIFIGG) form the signal peptide. A lipid anchor (N-palmitoyl cysteine) is attached at Cys-23. Cys-23 is lipidated: S-diacylglycerol cysteine.

This sequence belongs to the staphylococcal tandem lipoprotein family.

It is found in the cell membrane. This is an uncharacterized protein from Staphylococcus aureus (strain MW2).